Consider the following 392-residue polypeptide: Iron-sulfur cluster assembly SufBD family protein ML0594 (392 aa).

This sequence belongs to the iron-sulfur cluster assembly SufBD family.

The protein is Iron-sulfur cluster assembly SufBD family protein ML0594 of Mycobacterium leprae (strain TN).